A 344-amino-acid polypeptide reads, in one-letter code: MSYPKKVELPLTNCNQINLTKHKLLVLYEDMLLGRNFEDMCAQMYYKGKMFGFVHLYNGQEAVSTGVIKLLDSKDYVCSTYRDHVHALSKGVPSQNVMAELFGKETGCSRGRGGSMHIFSAPHNFLGGFAFIAEGIPVATGAAFQSIYRQQVLKEPGELRVTACFFGDGTTNNGQFFECLNMAVLWKLPIIFVVENNQWAIGMAHHRSSSIPEIHKKAEAFGLPGIEVDGMDVLAVRQVAEKAVERARQGQGPTLIEALTYRFRGHSLADPDELRSRQEKEAWVARDPIKKLKKHILDNQIASSDELNDIQSSVKIDLEQSVEFAMSSPEPNISELKRYLFADN.

His55, Tyr81, Arg82, Ala130, Ile132, Asp168, Gly169, and Asn197 together coordinate pyruvate. Thiamine diphosphate contacts are provided by Tyr81, Arg82, Ala130, Ile132, Asp168, Gly169, Asn197, and His266. Asp168 lines the Mg(2+) pocket. Asn197 contributes to the Mg(2+) binding site.

Heterodimer of an alpha and a beta chain. It depends on thiamine diphosphate as a cofactor. The cofactor is Mg(2+).

The protein localises to the plastid. It is found in the chloroplast. It carries out the reaction N(6)-[(R)-lipoyl]-L-lysyl-[protein] + pyruvate + H(+) = N(6)-[(R)-S(8)-acetyldihydrolipoyl]-L-lysyl-[protein] + CO2. The pyruvate dehydrogenase complex catalyzes the overall conversion of pyruvate to acetyl-CoA and CO(2). It contains multiple copies of three enzymatic components: pyruvate dehydrogenase (E1), dihydrolipoamide acetyltransferase (E2) and lipoamide dehydrogenase (E3). The protein is Pyruvate dehydrogenase E1 component subunit alpha (pdhA) of Porphyra purpurea (Red seaweed).